The primary structure comprises 151 residues: Putative pre-16S rRNA nuclease (151 aa).

It belongs to the YqgF nuclease family.

It localises to the cytoplasm. Could be a nuclease involved in processing of the 5'-end of pre-16S rRNA. The protein is Putative pre-16S rRNA nuclease of Nitrosospira multiformis (strain ATCC 25196 / NCIMB 11849 / C 71).